Consider the following 428-residue polypeptide: Glutamyl-tRNA reductase (428 aa).

Substrate-binding positions include 49–52 (TCNR), serine 107, 112–114 (EPQ), and glutamine 118. Residue cysteine 50 is the Nucleophile of the active site. 187 to 192 (GAGETI) contributes to the NADP(+) binding site.

The protein belongs to the glutamyl-tRNA reductase family. As to quaternary structure, homodimer.

It carries out the reaction (S)-4-amino-5-oxopentanoate + tRNA(Glu) + NADP(+) = L-glutamyl-tRNA(Glu) + NADPH + H(+). It functions in the pathway porphyrin-containing compound metabolism; protoporphyrin-IX biosynthesis; 5-aminolevulinate from L-glutamyl-tRNA(Glu): step 1/2. Functionally, catalyzes the NADPH-dependent reduction of glutamyl-tRNA(Glu) to glutamate 1-semialdehyde (GSA). This Pseudomonas fluorescens (strain Pf0-1) protein is Glutamyl-tRNA reductase.